A 542-amino-acid polypeptide reads, in one-letter code: Quinidine resistance protein 2 (542 aa).

The Cytoplasmic segment spans residues 1–67 (MAGATSSIIR…SFKTVLIAQC (67 aa)). The residue at position 21 (Ser-21) is a Phosphoserine. Thr-38 is subject to Phosphothreonine. Ser-40 carries the phosphoserine modification. The helical transmembrane segment at 68–88 (AFTGFFSTIAGAIYYPVLSVI) threads the bilayer. Over 89–100 (ERKFDIDEELVN) the chain is Extracellular. A helical transmembrane segment spans residues 101–121 (VTVVVYFVFQGLAPTFMGGFA). Residues 122 to 127 (DSLGRR) lie on the Cytoplasmic side of the membrane. The helical transmembrane segment at 128–148 (PVVLVAIVIYFGACIGLACAQ) threads the bilayer. Position 149 (Thr-149) is a topological domain, extracellular. A helical membrane pass occupies residues 150 to 170 (YAQIIVLRCLQAAGISPVIAI). The Cytoplasmic segment spans residues 171-187 (NSGIMGDVTTRAERGGY). The helical transmembrane segment at 188 to 208 (VGYVAGFQVLGSAFGALIGAG) threads the bilayer. At 209-216 (LSSRWGWR) the chain is on the extracellular side. The chain crosses the membrane as a helical span at residues 217–237 (AIFWFLAIGSGICFLASFLIL). Topologically, residues 238–300 (PETKRNISGN…APFKILKAYE (63 aa)) are cytoplasmic. A helical transmembrane segment spans residues 301–321 (ICILMLVAGLQFAMYTTHLTA). Residues 322–333 (LSTALSKQYHLT) are Extracellular-facing. Residues 334–354 (VAKVGLCYLPSGICTLCSIVI) traverse the membrane as a helical segment. At 355–413 (AGRYLNWNYRRRLKYYQNWLGKKRSKLLEEHDNDLNLVQRIIENDPKYTFNIFKARLQP) the chain is on the cytoplasmic side. A helical transmembrane segment spans residues 414–434 (AFVTLLLSSSGFCAYGWCITV). The Extracellular segment spans residues 435–437 (KAP). The chain crosses the membrane as a helical span at residues 438–458 (LAAVLCMSGFASLFSNCILTF). Residues 459–472 (STTLIVDLFPTKTS) are Cytoplasmic-facing. A helical transmembrane segment spans residues 473–493 (TATGCLNLFRCILSAVFIAAL). At 494 to 503 (SKMVEKMKFG) the chain is on the extracellular side. The helical transmembrane segment at 504 to 524 (GVFTFLGALTSSSSILLFILL) threads the bilayer. Over 525-542 (RKGKELAFKRKKQELGVN) the chain is Cytoplasmic.

The protein belongs to the major facilitator superfamily. CAR1 family.

It is found in the cell membrane. Its function is as follows. Multidrug resistance transporter involved in resistance and adaptation to quinidine and to the herbicide barban (4-chloro-2-butynyl [3-chlorophenyl] carbamate). Implicated in potassium uptake. The sequence is that of Quinidine resistance protein 2 (QDR2) from Saccharomyces cerevisiae (strain ATCC 204508 / S288c) (Baker's yeast).